The chain runs to 172 residues: Cytochrome b6-f complex iron-sulfur subunit (172 aa).

Residues 17-39 traverse the membrane as a helical segment; the sequence is VFLNALLSSSVGVVVVGTLYPVV. The Rieske domain occupies 61-161; that stretch reads GKPISVSELL…ATVDGDNVRF (101 aa). Residues Cys-107, His-109, Cys-125, and His-128 each contribute to the [2Fe-2S] cluster site. Cys-112 and Cys-127 are oxidised to a cystine.

This sequence belongs to the Rieske iron-sulfur protein family. As to quaternary structure, the 4 large subunits of the cytochrome b6-f complex are cytochrome b6, subunit IV (17 kDa polypeptide, PetD), cytochrome f and the Rieske protein, while the 4 small subunits are PetG, PetL, PetM and PetN. The complex functions as a dimer. [2Fe-2S] cluster is required as a cofactor.

It is found in the cellular thylakoid membrane. It catalyses the reaction 2 oxidized [plastocyanin] + a plastoquinol + 2 H(+)(in) = 2 reduced [plastocyanin] + a plastoquinone + 4 H(+)(out). In terms of biological role, component of the cytochrome b6-f complex, which mediates electron transfer between photosystem II (PSII) and photosystem I (PSI), cyclic electron flow around PSI, and state transitions. The polypeptide is Cytochrome b6-f complex iron-sulfur subunit (Synechococcus sp. (strain JA-3-3Ab) (Cyanobacteria bacterium Yellowstone A-Prime)).